Consider the following 238-residue polypeptide: uncharacterized protein (238 aa).

The next 7 helical transmembrane spans lie at 22–42 (VYGW…GLYA), 49–69 (LFSL…YIQA), 78–98 (AVMG…GTMV), 105–125 (FGGG…GLSA), 141–161 (ILML…VVSL), 166–186 (PLMY…LTVV), and 208–228 (LSLI…WYLL).

Belongs to the BI1 family.

It is found in the cell membrane. This is an uncharacterized protein from Chlamydia muridarum (strain MoPn / Nigg).